The sequence spans 143 residues: MSMALLPRRVKYRKSQRGSRKGNATRGTELAFGSFGMQALERAWITNTQIEAARVAIMRNVKRKGRLWIRIFPDKSVTARPPETRMGKGKGQPAFWVAVVLPGRILFELDGLPEQVAKESMRLAAAKLPIHTRFITRERLVKV.

The interval 1–26 (MSMALLPRRVKYRKSQRGSRKGNATR) is disordered. Positions 8–20 (RRVKYRKSQRGSR) are enriched in basic residues.

The protein belongs to the universal ribosomal protein uL16 family. In terms of assembly, part of the 50S ribosomal subunit.

Its function is as follows. Binds 23S rRNA and is also seen to make contacts with the A and possibly P site tRNAs. This Methylacidiphilum infernorum (isolate V4) (Methylokorus infernorum (strain V4)) protein is Large ribosomal subunit protein uL16.